A 223-amino-acid chain; its full sequence is Deoxyribose-phosphate aldolase (223 aa).

Asp89 serves as the catalytic Proton donor/acceptor. The active-site Schiff-base intermediate with acetaldehyde is Lys152. The Proton donor/acceptor role is filled by Lys181.

Belongs to the DeoC/FbaB aldolase family. DeoC type 1 subfamily.

It localises to the cytoplasm. The enzyme catalyses 2-deoxy-D-ribose 5-phosphate = D-glyceraldehyde 3-phosphate + acetaldehyde. Its pathway is carbohydrate degradation; 2-deoxy-D-ribose 1-phosphate degradation; D-glyceraldehyde 3-phosphate and acetaldehyde from 2-deoxy-alpha-D-ribose 1-phosphate: step 2/2. Its function is as follows. Catalyzes a reversible aldol reaction between acetaldehyde and D-glyceraldehyde 3-phosphate to generate 2-deoxy-D-ribose 5-phosphate. The chain is Deoxyribose-phosphate aldolase from Bacillus cytotoxicus (strain DSM 22905 / CIP 110041 / 391-98 / NVH 391-98).